Reading from the N-terminus, the 503-residue chain is ATP synthase subunit alpha (503 aa).

170–177 (GDRQTGKT) serves as a coordination point for ATP.

It belongs to the ATPase alpha/beta chains family. F-type ATPases have 2 components, CF(1) - the catalytic core - and CF(0) - the membrane proton channel. CF(1) has five subunits: alpha(3), beta(3), gamma(1), delta(1), epsilon(1). CF(0) has three main subunits: a(1), b(2) and c(9-12). The alpha and beta chains form an alternating ring which encloses part of the gamma chain. CF(1) is attached to CF(0) by a central stalk formed by the gamma and epsilon chains, while a peripheral stalk is formed by the delta and b chains.

It localises to the cell inner membrane. It carries out the reaction ATP + H2O + 4 H(+)(in) = ADP + phosphate + 5 H(+)(out). Functionally, produces ATP from ADP in the presence of a proton gradient across the membrane. The alpha chain is a regulatory subunit. The chain is ATP synthase subunit alpha from Pseudothermotoga lettingae (strain ATCC BAA-301 / DSM 14385 / NBRC 107922 / TMO) (Thermotoga lettingae).